A 140-amino-acid polypeptide reads, in one-letter code: Profilin-2 (140 aa).

Ala-2 bears the N-acetylalanine mark.

It belongs to the profilin family. Occurs in many kinds of cells as a complex with monomeric actin in a 1:1 ratio. Interacts with PFN2. Interacts with ACTMAP (via N-terminus); the interaction may facilitate efficient cleavage of the acetylated N-terminus of immature actin by ACTMAP.

The protein resides in the cytoplasm. The protein localises to the cytoskeleton. In terms of biological role, binds to actin and affects the structure of the cytoskeleton. At high concentrations, profilin prevents the polymerization of actin, whereas it enhances it at low concentrations. By binding to PIP2, it inhibits the formation of IP3 and DG. The polypeptide is Profilin-2 (Pfn2) (Rattus norvegicus (Rat)).